The chain runs to 250 residues: Pyrroloquinoline-quinone synthase (250 aa).

Belongs to the PqqC family.

It carries out the reaction 6-(2-amino-2-carboxyethyl)-7,8-dioxo-1,2,3,4,7,8-hexahydroquinoline-2,4-dicarboxylate + 3 O2 = pyrroloquinoline quinone + 2 H2O2 + 2 H2O + H(+). Its pathway is cofactor biosynthesis; pyrroloquinoline quinone biosynthesis. Ring cyclization and eight-electron oxidation of 3a-(2-amino-2-carboxyethyl)-4,5-dioxo-4,5,6,7,8,9-hexahydroquinoline-7,9-dicarboxylic-acid to PQQ. In Xanthomonas campestris pv. campestris (strain 8004), this protein is Pyrroloquinoline-quinone synthase.